The sequence spans 308 residues: Transcription factor zip-2 (308 aa).

A compositionally biased stretch (polar residues) spans 217–229 (QSSSSSTVETTIT). Positions 217 to 277 (QSSSSSTVET…RESKEERERL (61 aa)) are disordered. The bZIP domain occupies 242 to 305 (SSDYRHKRDK…EDYKRLVMMF (64 aa)). Positions 246-276 (RHKRDKNNLASQKSRQKRQAKIRESKEERER) are basic motif. A compositionally biased stretch (basic and acidic residues) spans 266-277 (KIRESKEERERL). The segment at 277–291 (LEKRKVQLQAMVLTL) is leucine-zipper.

Belongs to the bZIP family. C/EBP subfamily. As to expression, expressed in the pharynx and throughout the intestine.

Its subcellular location is the nucleus. Transcription factor that binds to the promoter and the enhancer regions of target genes. May act together with the bZIP transcription factor, cebp-2. Involved in responding to mitochondrial damage. Plays a role in the delay of age-associated mitochondrial fragmentation and muscle decline. Has a protective role in response to infection by the Gram-negative bacterium P.aeruginosa. Required to prevent P.aeruginosa ToxA-mediated lethality. Required for the activation of several infection response genes including irg-1 and irg-2 following P.aeruginosa infection; target gene activation may involve effects of the bacterial toxin, ToxA, and perhaps other toxins. The protein is Transcription factor zip-2 of Caenorhabditis elegans.